Here is a 407-residue protein sequence, read N- to C-terminus: 4-hydroxy-3-methylbut-2-en-1-yl diphosphate synthase (ferredoxin) (407 aa).

The [4Fe-4S] cluster site is built by cysteine 316, cysteine 319, cysteine 350, and glutamate 357.

Belongs to the IspG family. It depends on [4Fe-4S] cluster as a cofactor.

It carries out the reaction (2E)-4-hydroxy-3-methylbut-2-enyl diphosphate + 2 oxidized [2Fe-2S]-[ferredoxin] + H2O = 2-C-methyl-D-erythritol 2,4-cyclic diphosphate + 2 reduced [2Fe-2S]-[ferredoxin] + H(+). It functions in the pathway isoprenoid biosynthesis; isopentenyl diphosphate biosynthesis via DXP pathway; isopentenyl diphosphate from 1-deoxy-D-xylulose 5-phosphate: step 5/6. Converts 2C-methyl-D-erythritol 2,4-cyclodiphosphate (ME-2,4cPP) into 1-hydroxy-2-methyl-2-(E)-butenyl 4-diphosphate. The polypeptide is 4-hydroxy-3-methylbut-2-en-1-yl diphosphate synthase (ferredoxin) (Prochlorococcus marinus (strain SARG / CCMP1375 / SS120)).